Consider the following 380-residue polypeptide: Tryptophan--tRNA ligase 2 (380 aa).

A 'HIGH' region motif is present at residues 74–82 (PSGPMHLGH). Residues 249-253 (KMSSS) carry the 'KMSKS' region motif.

It belongs to the class-I aminoacyl-tRNA synthetase family.

The protein localises to the cytoplasm. It catalyses the reaction tRNA(Trp) + L-tryptophan + ATP = L-tryptophyl-tRNA(Trp) + AMP + diphosphate + H(+). The sequence is that of Tryptophan--tRNA ligase 2 from Halobacterium salinarum (strain ATCC 700922 / JCM 11081 / NRC-1) (Halobacterium halobium).